A 319-amino-acid polypeptide reads, in one-letter code: 4-hydroxy-3-methylbut-2-enyl diphosphate reductase (319 aa).

Cysteine 12 is a [4Fe-4S] cluster binding site. Residues histidine 41 and histidine 74 each coordinate (2E)-4-hydroxy-3-methylbut-2-enyl diphosphate. Dimethylallyl diphosphate contacts are provided by histidine 41 and histidine 74. Isopentenyl diphosphate is bound by residues histidine 41 and histidine 74. Cysteine 97 serves as a coordination point for [4Fe-4S] cluster. Histidine 125 contacts (2E)-4-hydroxy-3-methylbut-2-enyl diphosphate. Histidine 125 contacts dimethylallyl diphosphate. Histidine 125 provides a ligand contact to isopentenyl diphosphate. The Proton donor role is filled by glutamate 127. Threonine 168 lines the (2E)-4-hydroxy-3-methylbut-2-enyl diphosphate pocket. Position 198 (cysteine 198) interacts with [4Fe-4S] cluster. The (2E)-4-hydroxy-3-methylbut-2-enyl diphosphate site is built by serine 226, serine 227, asparagine 228, and serine 270. Residues serine 226, serine 227, asparagine 228, and serine 270 each contribute to the dimethylallyl diphosphate site. Isopentenyl diphosphate-binding residues include serine 226, serine 227, asparagine 228, and serine 270.

Belongs to the IspH family. As to quaternary structure, homodimer. [4Fe-4S] cluster serves as cofactor.

The catalysed reaction is isopentenyl diphosphate + 2 oxidized [2Fe-2S]-[ferredoxin] + H2O = (2E)-4-hydroxy-3-methylbut-2-enyl diphosphate + 2 reduced [2Fe-2S]-[ferredoxin] + 2 H(+). The enzyme catalyses dimethylallyl diphosphate + 2 oxidized [2Fe-2S]-[ferredoxin] + H2O = (2E)-4-hydroxy-3-methylbut-2-enyl diphosphate + 2 reduced [2Fe-2S]-[ferredoxin] + 2 H(+). The protein operates within isoprenoid biosynthesis; dimethylallyl diphosphate biosynthesis; dimethylallyl diphosphate from (2E)-4-hydroxy-3-methylbutenyl diphosphate: step 1/1. It functions in the pathway isoprenoid biosynthesis; isopentenyl diphosphate biosynthesis via DXP pathway; isopentenyl diphosphate from 1-deoxy-D-xylulose 5-phosphate: step 6/6. Catalyzes the conversion of 1-hydroxy-2-methyl-2-(E)-butenyl 4-diphosphate (HMBPP) into a mixture of isopentenyl diphosphate (IPP) and dimethylallyl diphosphate (DMAPP). Acts in the terminal step of the DOXP/MEP pathway for isoprenoid precursor biosynthesis. The chain is 4-hydroxy-3-methylbut-2-enyl diphosphate reductase from Hamiltonella defensa subsp. Acyrthosiphon pisum (strain 5AT).